Here is a 451-residue protein sequence, read N- to C-terminus: 23S rRNA (uracil(1939)-C(5))-methyltransferase RlmD (451 aa).

Positions 20–78 (QIPAGKKQRLTIERLSDDGRGIAFLEGKTWFVAGSLAGEEVEARVLNARGKVVEARTER) constitute a TRAM domain. Residues cysteine 91, cysteine 97, cysteine 100, and cysteine 179 each contribute to the [4Fe-4S] cluster site. Positions 283, 312, 317, 333, 360, and 381 each coordinate S-adenosyl-L-methionine. Cysteine 407 serves as the catalytic Nucleophile.

Belongs to the class I-like SAM-binding methyltransferase superfamily. RNA M5U methyltransferase family. RlmD subfamily.

The enzyme catalyses uridine(1939) in 23S rRNA + S-adenosyl-L-methionine = 5-methyluridine(1939) in 23S rRNA + S-adenosyl-L-homocysteine + H(+). Its function is as follows. Catalyzes the formation of 5-methyl-uridine at position 1939 (m5U1939) in 23S rRNA. The protein is 23S rRNA (uracil(1939)-C(5))-methyltransferase RlmD of Pseudomonas savastanoi pv. phaseolicola (strain 1448A / Race 6) (Pseudomonas syringae pv. phaseolicola (strain 1448A / Race 6)).